Reading from the N-terminus, the 357-residue chain is Histidinol-phosphate aminotransferase 2 (357 aa).

Lysine 216 carries the N6-(pyridoxal phosphate)lysine modification.

Belongs to the class-II pyridoxal-phosphate-dependent aminotransferase family. Histidinol-phosphate aminotransferase subfamily. As to quaternary structure, homodimer. It depends on pyridoxal 5'-phosphate as a cofactor.

It carries out the reaction L-histidinol phosphate + 2-oxoglutarate = 3-(imidazol-4-yl)-2-oxopropyl phosphate + L-glutamate. Its pathway is amino-acid biosynthesis; L-histidine biosynthesis; L-histidine from 5-phospho-alpha-D-ribose 1-diphosphate: step 7/9. The chain is Histidinol-phosphate aminotransferase 2 from Idiomarina loihiensis (strain ATCC BAA-735 / DSM 15497 / L2-TR).